The sequence spans 243 residues: Proteasome subunit alpha (243 aa).

Belongs to the peptidase T1A family. In terms of assembly, the 20S proteasome core is composed of 14 alpha and 14 beta subunits that assemble into four stacked heptameric rings, resulting in a barrel-shaped structure. The two inner rings, each composed of seven catalytic beta subunits, are sandwiched by two outer rings, each composed of seven alpha subunits. The catalytic chamber with the active sites is on the inside of the barrel. Has a gated structure, the ends of the cylinder being occluded by the N-termini of the alpha-subunits. Is capped at one or both ends by the proteasome regulatory ATPase, PAN.

Its subcellular location is the cytoplasm. Its activity is regulated as follows. The formation of the proteasomal ATPase PAN-20S proteasome complex, via the docking of the C-termini of PAN into the intersubunit pockets in the alpha-rings, triggers opening of the gate for substrate entry. Interconversion between the open-gate and close-gate conformations leads to a dynamic regulation of the 20S proteasome proteolysis activity. Functionally, component of the proteasome core, a large protease complex with broad specificity involved in protein degradation. This is Proteasome subunit alpha from Pyrobaculum aerophilum (strain ATCC 51768 / DSM 7523 / JCM 9630 / CIP 104966 / NBRC 100827 / IM2).